The chain runs to 309 residues: Taste receptor type 2 member 124 (309 aa).

Residues 1–7 are Extracellular-facing; the sequence is MVPVLHS. A helical membrane pass occupies residues 8-28; that stretch reads LSTIILIAEFVWGNLSNGLIV. Residues 29–46 are Cytoplasmic-facing; the sequence is LKNCIDWINKKELSTVDQ. The helical transmembrane segment at 47 to 67 threads the bilayer; that stretch reads ILIVLAISRISLIWETLIIWV. Residues 68-86 are Extracellular-facing; the sequence is KDQLISSITIEELKIIVFS. Residues 87–107 form a helical membrane-spanning segment; sequence FILSSHFSLWLATALSIFYLF. The Cytoplasmic segment spans residues 108–127; the sequence is RIPNCYWQIFLYLKWRIKQL. The chain crosses the membrane as a helical span at residues 128–148; it reads IVHMLLGSLVFLVANMIQITI. At 149-183 the chain is on the extracellular side; sequence TLEERFYQYGGNTSVNSMETEFSILIELMLFNMTM. N-linked (GlcNAc...) asparagine glycans are attached at residues Asn-160 and Asn-180. Residues 184–204 form a helical membrane-spanning segment; sequence FSIIPFSLALISFLLLIFSLW. The Cytoplasmic segment spans residues 205 to 230; it reads KHLQKMPLNSRGDRDPSATAHRNALR. A helical membrane pass occupies residues 231–251; it reads ILVSFLLLYTIYFLSLLISWV. Over 252–261 the chain is Extracellular; sequence AQKNQSELVH. N-linked (GlcNAc...) asparagine glycosylation occurs at Asn-255. A helical transmembrane segment spans residues 262–282; it reads IICMITSLVYPSFHSYILILG. Topologically, residues 283–309 are cytoplasmic; sequence NYKLKQTSLWVMRQLGCRMKRQNTPTT.

This sequence belongs to the G-protein coupled receptor T2R family.

The protein localises to the membrane. Its function is as follows. Putative taste receptor which may play a role in the perception of bitterness. The protein is Taste receptor type 2 member 124 of Mus musculus (Mouse).